We begin with the raw amino-acid sequence, 67 residues long: Transcription elongation factor Spt4 (67 aa).

Zn(2+) contacts are provided by Cys-7, Cys-10, Cys-19, and Cys-22.

The protein belongs to the archaeal Spt4 family. As to quaternary structure, heterodimer composed of Spt4 and Spt5. Interacts with RNA polymerase (RNAP). The complex interacts with FttA.

The protein localises to the chromosome. The Stp4-Spt5 complex stimulates transcription elongation on both naked DNA and histone-bound DNA (chromatin), facilitating transcription through the histone barrier. Neither protein functions alone. The complex also stimulates the transcription termination activity of FttA, neither protein alone stimulates FttA-dependent termination. The polypeptide is Transcription elongation factor Spt4 (Thermococcus kodakarensis (strain ATCC BAA-918 / JCM 12380 / KOD1) (Pyrococcus kodakaraensis (strain KOD1))).